Reading from the N-terminus, the 443-residue chain is Glutamine synthetase (443 aa).

Residues 11–97 enclose the GS beta-grasp domain; it reads VQVEVPRPRF…VYGYIYKGDE (87 aa). Residues 103–443 enclose the GS catalytic domain; that stretch reads PRGILKRVLE…EWELERYFYV (341 aa). Positions 126 and 128 each coordinate Mg(2+). Residue glutamate 176 coordinates ATP. The Mg(2+) site is built by glutamate 181 and glutamate 188. Glycine 233 contacts L-glutamate. Mg(2+) is bound at residue histidine 237. Residues 239 to 241 and serine 241 each bind ATP; that span reads HIS. L-glutamate-binding residues include arginine 287, glutamate 293, and arginine 305. 2 residues coordinate ATP: arginine 305 and arginine 310. Glutamate 322 contacts Mg(2+). L-glutamate is bound at residue arginine 324.

The protein belongs to the glutamine synthetase family. In terms of assembly, oligomer of 12 subunits arranged in the form of two hexagons. Mg(2+) is required as a cofactor. It depends on Mn(2+) as a cofactor.

It localises to the cytoplasm. The enzyme catalyses L-glutamate + NH4(+) + ATP = L-glutamine + ADP + phosphate + H(+). It carries out the reaction hydroxylamine + L-glutamate + ATP = L-glutamine hydroxamate + ADP + phosphate. With respect to regulation, the activity of this enzyme is not controlled by adenylation. Its function is as follows. Carries out the ATP-dependent synthesis of glutamine from ammonium nitrogen and glutamate. Exhibits both L-gamma-glutamylhydroxamate synthetase and gamma-glutamyltransferase activities when using hydroxylamine as substrate; in fact, the enzyme possesses low biosynthetic activity, suggesting that the reaction is biased towards the degradation of glutamine under ammonia-rich conditions. Might play some role in ammonia assimilation under ammonia-starvation conditions. Can also use GTP instead of ATP in the synthetase reaction, but not CTP or UTP. This chain is Glutamine synthetase, found in Thermococcus kodakarensis (strain ATCC BAA-918 / JCM 12380 / KOD1) (Pyrococcus kodakaraensis (strain KOD1)).